The chain runs to 490 residues: Chromosomal replication initiator protein DnaA (490 aa).

The segment at 1-75 (MAVSSDAEQK…SELWKQEDAD (75 aa)) is domain I, interacts with DnaA modulators. Residues 75–145 (DLLKIEIVVR…SEFRHNVLGS (71 aa)) are domain II. Residues 146–368 (PLDPRYTFGS…GAFNQLLFRQ (223 aa)) are domain III, AAA+ region. Residues Gly-192, Gly-194, Lys-195, and Thr-196 each coordinate ATP. A domain IV, binds dsDNA region spans residues 369-490 (SFEPQITIDR…LLRRLINDQA (122 aa)).

Belongs to the DnaA family. In terms of assembly, oligomerizes as a right-handed, spiral filament on DNA at oriC.

It is found in the cytoplasm. Functionally, plays an essential role in the initiation and regulation of chromosomal replication. ATP-DnaA binds to the origin of replication (oriC) to initiate formation of the DNA replication initiation complex once per cell cycle. Binds the DnaA box (a 9 base pair repeat at the origin) and separates the double-stranded (ds)DNA. Forms a right-handed helical filament on oriC DNA; dsDNA binds to the exterior of the filament while single-stranded (ss)DNA is stabiized in the filament's interior. The ATP-DnaA-oriC complex binds and stabilizes one strand of the AT-rich DNA unwinding element (DUE), permitting loading of DNA polymerase. After initiation quickly degrades to an ADP-DnaA complex that is not apt for DNA replication. Binds acidic phospholipids. The sequence is that of Chromosomal replication initiator protein DnaA from Mesorhizobium japonicum (strain LMG 29417 / CECT 9101 / MAFF 303099) (Mesorhizobium loti (strain MAFF 303099)).